The primary structure comprises 248 residues: MYQNSLIDFNPYNSLSAVEVGKHLYWKIGSLQLHGQVFIVSWLVIATLLTLSFLGTRNLQRIPEKFQNFMEFILEFLQDIAKNQIGEHEYRPWVPYIATLFLFILGCNWAGALIPWKLIHLPEGELAAPTNDINTTVALSLLTSLAYFYAGLSKKGLGYFARYIQPTPVLLPINILEDFTKPLSLSFRLFGNVLADELVVSVFTLLIPILIPLPVMILGLFASSIQALIFSTLSAAYIGEAMEGHGEE.

Transmembrane regions (helical) follow at residues 35–55, 94–114, 133–153, 202–222, and 224–244; these read GQVF…SFLG, VPYI…GALI, INTT…AGLS, VFTL…GLFA, and SIQA…AMEG.

This sequence belongs to the ATPase A chain family. As to quaternary structure, F-type ATPases have 2 components, CF(1) - the catalytic core - and CF(0) - the membrane proton channel. CF(1) has five subunits: alpha(3), beta(3), gamma(1), delta(1), epsilon(1). CF(0) has four main subunits: a, b, b' and c.

It localises to the plastid. Its subcellular location is the chloroplast thylakoid membrane. In terms of biological role, key component of the proton channel; it plays a direct role in the translocation of protons across the membrane. In Pyropia yezoensis (Susabi-nori), this protein is ATP synthase subunit a, chloroplastic.